Here is a 535-residue protein sequence, read N- to C-terminus: Arginine-containing cyclodipeptide synthase anoA (535 aa).

Residues 93-114 (LLSPPREPGPIDSETKTREKKS) are disordered. Positions 105–114 (SETKTREKKS) are enriched in basic and acidic residues. The Conserved DDXXE motif signature appears at 424-428 (DDIAE).

This sequence belongs to the arginine-containing cyclodipeptide synthase family.

It carries out the reaction L-tryptophyl-tRNA(Trp) + L-arginyl-tRNA(Arg) = cyclo(L-arginyl-L-tryptophyl) + tRNA(Trp) + tRNA(Arg) + H(+). Its pathway is secondary metabolite biosynthesis. In terms of biological role, arginine-containing cyclodipeptide synthase; part of the cluster that mediates the biosynthesis of a highly modified cyclo-arginine-tryptophan dipeptide (cRW). Within the pathway, AnoA acts as the scaffold-generating enzyme and is responsible for formation of the cyclo-Arg-Trp diketopiperazine (cRW) from L-arginyl-tRNA(Arg) + L-tryptophanyl-tRNA(Trp). Additional enzymes from the cluster then further modify the cyclo-Arg-Asp diketopiperazine (cRW) scaffold. The chain is Arginine-containing cyclodipeptide synthase anoA from Aspergillus nomiae (Aspergillus nomius).